The chain runs to 936 residues: Protocadherin gamma-A10 (936 aa).

The N-terminal stretch at 1–32 (MAAQRNRSKESKDCSGLVLLCLFFGIPWEAGA) is a signal peptide. Cadherin domains are found at residues 33–137 (RQIS…APTF), 138–246 (QAEN…APVF), 247–351 (TLPE…SPEL), 352–456 (TITS…PPTF), 457–566 (SQVS…APEI), and 574–687 (DGST…SPAN). At 33–696 (RQISYSIPEE…NSETSDLTLY (664 aa)) the chain is on the extracellular side. Asn51 carries N-linked (GlcNAc...) asparagine glycosylation. Asn423 and Asn549 each carry an N-linked (GlcNAc...) asparagine glycan. A helical membrane pass occupies residues 697-717 (LVVAVAAVSCVFLAFVIVLLA). Residues 718 to 936 (LRLRRWHKSR…KKKSGKKEKK (219 aa)) are Cytoplasmic-facing. 2 disordered regions span residues 801-845 (SKFP…WPNN) and 906-936 (ATLT…KEKK). The segment covering 820–845 (WRFSQAQRPGTSGSQNGDDTGTWPNN) has biased composition (polar residues). Over residues 926 to 936 (NKKKSGKKEKK) the composition is skewed to basic residues.

Its subcellular location is the cell membrane. Functionally, potential calcium-dependent cell-adhesion protein. May be involved in the establishment and maintenance of specific neuronal connections in the brain. The chain is Protocadherin gamma-A10 (PCDHGA10) from Pan troglodytes (Chimpanzee).